Consider the following 366-residue polypeptide: Actin-like protein 8 (366 aa).

This sequence belongs to the actin family. Strongly expressed in testis and pancreas. Weak expression in placenta.

The protein resides in the cytoplasm. It localises to the cytoskeleton. The sequence is that of Actin-like protein 8 (ACTL8) from Homo sapiens (Human).